The primary structure comprises 429 residues: Glutamate-1-semialdehyde 2,1-aminomutase 1 (429 aa).

At K268 the chain carries N6-(pyridoxal phosphate)lysine.

This sequence belongs to the class-III pyridoxal-phosphate-dependent aminotransferase family. HemL subfamily. As to quaternary structure, homodimer. The cofactor is pyridoxal 5'-phosphate.

It localises to the cytoplasm. The catalysed reaction is (S)-4-amino-5-oxopentanoate = 5-aminolevulinate. It participates in porphyrin-containing compound metabolism; protoporphyrin-IX biosynthesis; 5-aminolevulinate from L-glutamyl-tRNA(Glu): step 2/2. This chain is Glutamate-1-semialdehyde 2,1-aminomutase 1, found in Listeria monocytogenes serotype 4b (strain F2365).